The primary structure comprises 767 residues: Integrin beta-8 (767 aa).

The first 21 residues, methionine 1–arginine 21, serve as a signal peptide directing secretion. Over glycine 22–leucine 681 the chain is Extracellular. The region spanning arginine 46–proline 95 is the PSI domain. Intrachain disulfides connect cysteine 47–cysteine 65, cysteine 55–cysteine 469, cysteine 58–cysteine 83, cysteine 68–cysteine 94, cysteine 211–cysteine 218, cysteine 266–cysteine 307, cysteine 407–cysteine 419, cysteine 439–cysteine 467, cysteine 471–cysteine 490, cysteine 471–cysteine 493, cysteine 481–cysteine 493, cysteine 498–cysteine 527, cysteine 510–cysteine 525, cysteine 519–cysteine 530, cysteine 532–cysteine 545, cysteine 552–cysteine 566, cysteine 560–cysteine 571, cysteine 573–cysteine 582, cysteine 584–cysteine 608, cysteine 592–cysteine 606, cysteine 600–cysteine 611, cysteine 613–cysteine 623, cysteine 626–cysteine 629, cysteine 633–cysteine 660, and cysteine 639–cysteine 656. Residues proline 146–isoleucine 384 form the VWFA domain. 2 residues coordinate Mg(2+): aspartate 154 and serine 156. Aspartate 193 lines the Ca(2+) pocket. Residue asparagine 233 is glycosylated (N-linked (GlcNAc...) asparagine). The Ca(2+) site is built by asparagine 249, aspartate 251, proline 253, and glutamate 254. Position 254 (glutamate 254) interacts with Mg(2+). Asparagine 402 is a glycosylation site (N-linked (GlcNAc...) asparagine). 3 N-linked (GlcNAc...) asparagine glycosylation sites follow: asparagine 421, asparagine 431, and asparagine 456. I-EGF domains lie at cysteine 471–aspartate 494, cysteine 498–glutamate 546, lysine 547–glutamine 583, and cysteine 584–glutamate 624. An N-linked (GlcNAc...) asparagine glycan is attached at asparagine 647. Residues arginine 682–isoleucine 702 traverse the membrane as a helical segment. At arginine 703 to phenylalanine 767 the chain is on the cytoplasmic side.

The protein belongs to the integrin beta chain family. As to quaternary structure, heterodimer of an alpha and a beta subunit. Beta-8 (ITGB8) associates with alpha-V (ITGAV) to form ITGAV:ITGB8. ITGAV:ITGB8 interacts with TGFB1.

The protein localises to the cell membrane. Integrin alpha-V:beta-8 (ITGAV:ITGB8) is a receptor for fibronectin. It recognizes the sequence R-G-D in its ligands. Integrin alpha-V:beta-6 (ITGAV:ITGB6) mediates R-G-D-dependent release of transforming growth factor beta-1 (TGF-beta-1) from regulatory Latency-associated peptide (LAP), thereby playing a key role in TGF-beta-1 activation on the surface of activated regulatory T-cells (Tregs). Required during vasculogenesis. In Mus musculus (Mouse), this protein is Integrin beta-8.